A 462-amino-acid polypeptide reads, in one-letter code: MSELNVITKERTAVINPIVTCQPLGAMYAVSGIERGMPLVHGSQGCSTFVRYGFARHFREPADIAVTSLHEDAAVFGGRKNLISGLGNLAARFKPDVMGVVTTCSSEIIGDDVAGFIKTAKVEIAKKMGEEAANKIKIVQINTPSFVEHQFKGYDNAIKAIVDTLAEPKDEENGKLIIIPGIVNPGDIREIKHMLSLMGVEGILLTDTSDPFDSPLRPSKADKNPYYQKGGTPLADLQDCANSLGTISLANYANSAPASLEKKYNMPSKVSEAPIGIQNTDSFIRTVKKFTGNDVTDEILDERGIVIDAMADVASRYLFGRKVAIYGDPSITVGMARFVAELGMIPKVVCTGVKNEYFVNDLKKVAKESDEDIDALFGQDLRALDVYLKENPVDLMIGSSDGRLMAKDLGIPLYRVGYPVYDRVGYQRRPIIGYNGALNLVDGITNTILDKYYETQDWKLQQ.

Residues Cys21, Cys46, Cys104, and Ser145 each coordinate [8Fe-7S] cluster.

Belongs to the NifD/NifK/NifE/NifN family. In terms of assembly, tetramer of two alpha and two beta chains. Forms complex with the iron protein (nitrogenase component 2). It depends on [8Fe-7S] cluster as a cofactor.

The catalysed reaction is N2 + 8 reduced [2Fe-2S]-[ferredoxin] + 16 ATP + 16 H2O = H2 + 8 oxidized [2Fe-2S]-[ferredoxin] + 2 NH4(+) + 16 ADP + 16 phosphate + 6 H(+). Functionally, this molybdenum-iron protein is part of the nitrogenase complex that catalyzes the key enzymatic reactions in nitrogen fixation. The protein is Nitrogenase molybdenum-iron protein beta chain (nifK) of Methanococcus maripaludis (Methanococcus deltae).